Consider the following 493-residue polypeptide: Guanosine-5'-triphosphate,3'-diphosphate pyrophosphatase (493 aa).

The protein belongs to the GppA/Ppx family. GppA subfamily.

It catalyses the reaction guanosine 3'-diphosphate 5'-triphosphate + H2O = guanosine 3',5'-bis(diphosphate) + phosphate + H(+). Its pathway is purine metabolism; ppGpp biosynthesis; ppGpp from GTP: step 2/2. Its function is as follows. Catalyzes the conversion of pppGpp to ppGpp. Guanosine pentaphosphate (pppGpp) is a cytoplasmic signaling molecule which together with ppGpp controls the 'stringent response', an adaptive process that allows bacteria to respond to amino acid starvation, resulting in the coordinated regulation of numerous cellular activities. This chain is Guanosine-5'-triphosphate,3'-diphosphate pyrophosphatase, found in Salmonella paratyphi A (strain ATCC 9150 / SARB42).